Consider the following 142-residue polypeptide: MNCSESQRLRTLLSRLLLELHHRGNASGLGAGPRPSMGMGVVPDPFVGREVTSAKGDDAYLYILLIMIFYACLAGGLILAYTRSRKLVEAKDEPSQACAEHEWAPGGALTADAEAAAGSQAEGRRQLASEGLPALAQGAERV.

Residues N2 and N25 are each glycosylated (N-linked (GlcNAc...) asparagine). The chain crosses the membrane as a helical span at residues L61–Y81. Topologically, residues T82–V142 are cytoplasmic. The disordered stretch occupies residues S119 to V142.

The protein belongs to the potassium channel KCNE family. As to quaternary structure, interacts with KCNQ1; impairs KCNQ1 localization in lipid rafts and only conducts current upon strong and continued depolarization. In terms of tissue distribution, highly expressed in heart, skeletal muscle, brain, spinal cord and placenta.

The protein localises to the membrane. Functionally, potassium channel ancillary subunit that is essential for generation of some native K(+) currents by virtue of formation of heteromeric ion channel complex with voltage-gated potassium (Kv) channel pore-forming alpha subunits. Functions as an inhibitory beta-subunit of the repolarizing cardiac potassium ion channel KCNQ1. This Homo sapiens (Human) protein is Potassium voltage-gated channel subfamily E regulatory beta subunit 5 (KCNE5).